Reading from the N-terminus, the 418-residue chain is Somatostatin receptor type 3 (418 aa).

The disordered stretch occupies residues 1-21 (MDMLHPSSVSTTSEPENASSA). Over 1–43 (MDMLHPSSVSTTSEPENASSAWPPDATLGNVSAGPSPAGLAVS) the chain is Extracellular. A compositionally biased stretch (polar residues) spans 7–20 (SSVSTTSEPENASS). N-linked (GlcNAc...) asparagine glycans are attached at residues Asn17 and Asn30. A helical membrane pass occupies residues 44–69 (GVLIPLVYLVVCVVGLLGNSLVIYVV). At 70–79 (LRHTASPSVT) the chain is on the cytoplasmic side. The chain crosses the membrane as a helical span at residues 80–101 (NVYILNLALADELFMLGLPFLA). Residues 102 to 116 (AQNALSYWPFGSLMC) are Extracellular-facing. A disulfide bridge connects residues Cys116 and Cys191. A helical transmembrane segment spans residues 117–138 (RLVMAVDGINQFTSIFCLTVMS). Over 139 to 161 (VDRYLAVVHPTRSARWRTAPVAR) the chain is Cytoplasmic. Residues 162 to 181 (TVSAAVWVASAVVVLPVVVF) form a helical membrane-spanning segment. Topologically, residues 182–205 (SGVPRGMSTCHMQWPEPAAAWRAG) are extracellular. The chain crosses the membrane as a helical span at residues 206–231 (FIIYTAALGFFGPLLVICLCYLLIVV). The Cytoplasmic portion of the chain corresponds to 232 to 257 (KVRSAGRRVWAPSCQRRRRSERRVTR). The helical transmembrane segment at 258 to 279 (MVVAVVALFVLCWMPFYVLNIV) threads the bilayer. Residues 280 to 293 (NVVCPLPEEPAFFG) are Extracellular-facing. Residues 294-316 (LYFLVVALPYANSCANPILYGFL) traverse the membrane as a helical segment. Residues 317–418 (SYRFKQGFRR…KSSTMRISYL (102 aa)) are Cytoplasmic-facing. 2 positions are modified to phosphoserine: Ser332 and Ser337. Residues 335-418 (VRSQEPTVGP…KSSTMRISYL (84 aa)) form a disordered region. Thr348 carries the phosphothreonine modification. Acidic residues predominate over residues 348-360 (TEEEDEEEEDGEE). The segment covering 361–371 (SREGGKGKEMN) has biased composition (basic and acidic residues). Composition is skewed to polar residues over residues 373–385 (RVSQITQPGTSGQ) and 395–418 (KEQQLLPQEASTGEKSSTMRISYL).

This sequence belongs to the G-protein coupled receptor 1 family. In terms of assembly, homodimer and heterodimer with SSTR2. Heterodimerization with SSTR2 inactivates SSTR3 receptor function. Post-translationally, phosphorylated. Phosphorylation increases upon somatostatin binding. As to expression, brain, pituitary and pancreas.

The protein resides in the cell membrane. Functionally, receptor for somatostatin-14 and -28. This receptor is coupled via pertussis toxin sensitive G proteins to inhibition of adenylyl cyclase. This chain is Somatostatin receptor type 3 (SSTR3), found in Homo sapiens (Human).